The primary structure comprises 557 residues: Dihydroxy-acid dehydratase (557 aa).

Cys-49 contributes to the [2Fe-2S] cluster binding site. Asp-81 is a binding site for Mg(2+). Residue Cys-122 participates in [2Fe-2S] cluster binding. Positions 123 and 124 each coordinate Mg(2+). N6-carboxylysine is present on Lys-124. Position 194 (Cys-194) interacts with [2Fe-2S] cluster. A Mg(2+)-binding site is contributed by Glu-446. Ser-472 serves as the catalytic Proton acceptor.

Belongs to the IlvD/Edd family. In terms of assembly, homodimer. It depends on [2Fe-2S] cluster as a cofactor. Requires Mg(2+) as cofactor.

The enzyme catalyses (2R)-2,3-dihydroxy-3-methylbutanoate = 3-methyl-2-oxobutanoate + H2O. It carries out the reaction (2R,3R)-2,3-dihydroxy-3-methylpentanoate = (S)-3-methyl-2-oxopentanoate + H2O. The protein operates within amino-acid biosynthesis; L-isoleucine biosynthesis; L-isoleucine from 2-oxobutanoate: step 3/4. It participates in amino-acid biosynthesis; L-valine biosynthesis; L-valine from pyruvate: step 3/4. In terms of biological role, functions in the biosynthesis of branched-chain amino acids. Catalyzes the dehydration of (2R,3R)-2,3-dihydroxy-3-methylpentanoate (2,3-dihydroxy-3-methylvalerate) into 2-oxo-3-methylpentanoate (2-oxo-3-methylvalerate) and of (2R)-2,3-dihydroxy-3-methylbutanoate (2,3-dihydroxyisovalerate) into 2-oxo-3-methylbutanoate (2-oxoisovalerate), the penultimate precursor to L-isoleucine and L-valine, respectively. In Prochlorococcus marinus (strain AS9601), this protein is Dihydroxy-acid dehydratase.